The primary structure comprises 351 residues: Biotin synthase (351 aa).

In terms of domain architecture, Radical SAM core spans 44–262; the sequence is NRVQVSTLLS…LAVARILMPQ (219 aa). The [4Fe-4S] cluster site is built by cysteine 59, cysteine 63, and cysteine 66. [2Fe-2S] cluster contacts are provided by cysteine 103, cysteine 134, cysteine 194, and arginine 266.

This sequence belongs to the radical SAM superfamily. Biotin synthase family. Homodimer. [4Fe-4S] cluster is required as a cofactor. It depends on [2Fe-2S] cluster as a cofactor.

The enzyme catalyses (4R,5S)-dethiobiotin + (sulfur carrier)-SH + 2 reduced [2Fe-2S]-[ferredoxin] + 2 S-adenosyl-L-methionine = (sulfur carrier)-H + biotin + 2 5'-deoxyadenosine + 2 L-methionine + 2 oxidized [2Fe-2S]-[ferredoxin]. Its pathway is cofactor biosynthesis; biotin biosynthesis; biotin from 7,8-diaminononanoate: step 2/2. Functionally, catalyzes the conversion of dethiobiotin (DTB) to biotin by the insertion of a sulfur atom into dethiobiotin via a radical-based mechanism. The chain is Biotin synthase from Pseudomonas fluorescens (strain Pf0-1).